A 366-amino-acid chain; its full sequence is Protein disulfide isomerase-like 2-1 (366 aa).

The N-terminal stretch at 1–29 (MATPQISRKALASLLLLVAAAAAVSTASA) is a signal peptide. 2 Thioredoxin domains span residues 30–138 (DDVL…SEAA) and 139–257 (TNVK…EKCG). Catalysis depends on nucleophile residues cysteine 59, cysteine 62, cysteine 178, and cysteine 181. Intrachain disulfides connect cysteine 59-cysteine 62 and cysteine 178-cysteine 181.

Belongs to the protein disulfide isomerase family.

It is found in the secreted. The catalysed reaction is Catalyzes the rearrangement of -S-S- bonds in proteins.. Acts as a protein-folding catalyst that interacts with nascent polypeptides to catalyze the formation, isomerization, and reduction or oxidation of disulfide bonds. May play a role in storage protein biogenesis. The polypeptide is Protein disulfide isomerase-like 2-1 (PDIL2-1) (Oryza sativa subsp. japonica (Rice)).